Here is a 605-residue protein sequence, read N- to C-terminus: Isocitrate dehydrogenase kinase/phosphatase (605 aa).

ATP contacts are provided by residues 327–333 (APGIKGL) and Lys-348. Asp-383 is an active-site residue.

Belongs to the AceK family.

It localises to the cytoplasm. It carries out the reaction L-seryl-[isocitrate dehydrogenase] + ATP = O-phospho-L-seryl-[isocitrate dehydrogenase] + ADP + H(+). Functionally, bifunctional enzyme which can phosphorylate or dephosphorylate isocitrate dehydrogenase (IDH) on a specific serine residue. This is a regulatory mechanism which enables bacteria to bypass the Krebs cycle via the glyoxylate shunt in response to the source of carbon. When bacteria are grown on glucose, IDH is fully active and unphosphorylated, but when grown on acetate or ethanol, the activity of IDH declines drastically concomitant with its phosphorylation. The polypeptide is Isocitrate dehydrogenase kinase/phosphatase (Burkholderia multivorans (strain ATCC 17616 / 249)).